The following is a 154-amino-acid chain: Ribosome maturation factor RimP (154 aa).

This sequence belongs to the RimP family.

The protein localises to the cytoplasm. In terms of biological role, required for maturation of 30S ribosomal subunits. This is Ribosome maturation factor RimP from Clostridium novyi (strain NT).